Consider the following 352-residue polypeptide: MDYQVSSPIYDIDYGPSEPCRKIDVKQMGAHLLPPLYSMVFLFGFVGNMLVVLILINCKRLKSMTDIYLLNLAISDLIFLFTVPFWAHYAAGQWDFGNTMCQFLTGLYFIGFFSGIFFIILLTIDRYLAIVHAVFALKARTVTFGVVTSVITWVVAVFASLPGIIFTRSQKEGYHYTCSPHFPFSQYQFWKNFETLKMVILGLVLPLLVMVICYSGILKTLLRCRNEKKRHRAVRLIFTIMIVYFLFWAPYNIVLLLNTYQEFFGLNNCSSSNRLDQAMQVTETLGMTHCCVNPIIYAFVGEKFRNYLKVFFQKHIAKCFCECCSIFQKEAPERANSVYTRSTGEQEISVGL.

At 1–30 (MDYQVSSPIYDIDYGPSEPCRKIDVKQMGA) the chain is on the extracellular side. Sulfotyrosine is present on tyrosine 3. Serine 6 and serine 7 each carry an O-linked (GalNAc...) serine glycan. 2 positions are modified to sulfotyrosine: tyrosine 10 and tyrosine 14. 2 cysteine pairs are disulfide-bonded: cysteine 20–cysteine 269 and cysteine 101–cysteine 178. The helical transmembrane segment at 31-58 (HLLPPLYSMVFLFGFVGNMLVVLILINC) threads the bilayer. At 59 to 68 (KRLKSMTDIY) the chain is on the cytoplasmic side. The chain crosses the membrane as a helical span at residues 69-89 (LLNLAISDLIFLFTVPFWAHY). Over 90–102 (AAGQWDFGNTMCQ) the chain is Extracellular. A helical transmembrane segment spans residues 103–124 (FLTGLYFIGFFSGIFFIILLTI). Topologically, residues 125–141 (DRYLAIVHAVFALKART) are cytoplasmic. Residues 142 to 166 (VTFGVVTSVITWVVAVFASLPGIIF) traverse the membrane as a helical segment. The Extracellular segment spans residues 167–198 (TRSQKEGYHYTCSPHFPFSQYQFWKNFETLKM). The chain crosses the membrane as a helical span at residues 199-218 (VILGLVLPLLVMVICYSGIL). Topologically, residues 219 to 235 (KTLLRCRNEKKRHRAVR) are cytoplasmic. The helical transmembrane segment at 236-260 (LIFTIMIVYFLFWAPYNIVLLLNTY) threads the bilayer. Topologically, residues 261–277 (QEFFGLNNCSSSNRLDQ) are extracellular. Residues 278 to 301 (AMQVTETLGMTHCCVNPIIYAFVG) traverse the membrane as a helical segment. Residues 302 to 352 (EKFRNYLKVFFQKHIAKCFCECCSIFQKEAPERANSVYTRSTGEQEISVGL) lie on the Cytoplasmic side of the membrane. S-palmitoyl cysteine attachment occurs at residues cysteine 321, cysteine 323, and cysteine 324. Residues serine 337, serine 342, and serine 349 each carry the phosphoserine; by BARK1 modification.

Belongs to the G-protein coupled receptor 1 family. Interacts with PRAF2. Efficient ligand binding to CCL3/MIP-1alpha and CCL4/MIP-1beta requires sulfation, O-glycosylation and sialic acid modifications. Glycosylation on Ser-6 is required for efficient binding of CCL4. Interacts with GRK2. Interacts with ARRB1 and ARRB2. Interacts with CNIH4. Interacts with S100A4; this interaction stimulates T-lymphocyte chemotaxis. Sulfated on at least 2 of the N-terminal tyrosines. Sulfation is required for efficient binding of the chemokines, CCL3 and CCL4. Post-translationally, palmitoylation in the C-terminal is important for cell surface expression. In terms of processing, phosphorylation on serine residues in the C-terminal is stimulated by binding CC chemokines especially by APO-RANTES. O-glycosylated, but not N-glycosylated. Ser-6 appears to be the major site even if Ser-7 may be also O-glycosylated. Also sialylated glycans present which contribute to chemokine binding. Ser-17 may also be glycosylated and, if so, with small moieties such as a T-antigen.

It localises to the cell membrane. Functionally, receptor for a number of inflammatory CC-chemokines including CCL3/MIP-1-alpha, CCL4/MIP-1-beta and RANTES and subsequently transduces a signal by increasing the intracellular calcium ion level. May play a role in the control of granulocytic lineage proliferation or differentiation. Participates in T-lymphocyte migration to the infection site by acting as a chemotactic receptor. The chain is C-C chemokine receptor type 5 (CCR5) from Mico humeralifer (Black and white tassel-ear marmoset).